Reading from the N-terminus, the 567-residue chain is Potassium-transporting ATPase potassium-binding subunit (567 aa).

11 consecutive transmembrane segments (helical) span residues 5–25, 64–84, 136–156, 179–199, 254–274, 285–305, 332–352, 359–376, 421–441, 486–506, and 529–549; these read GWIQ…PLGG, TTYA…LYML, GLTV…IALI, LYVL…LGVP, ISNM…TNVF, WAIF…CYWA, IAMS…AVIA, ALGG…EIII, MLAV…ASVI, ITIG…AMAI, and LFVG…FFPA.

It belongs to the KdpA family. The system is composed of three essential subunits: KdpA, KdpB and KdpC.

The protein localises to the cell inner membrane. Its function is as follows. Part of the high-affinity ATP-driven potassium transport (or Kdp) system, which catalyzes the hydrolysis of ATP coupled with the electrogenic transport of potassium into the cytoplasm. This subunit binds the periplasmic potassium ions and delivers the ions to the membrane domain of KdpB through an intramembrane tunnel. This chain is Potassium-transporting ATPase potassium-binding subunit, found in Brucella anthropi (strain ATCC 49188 / DSM 6882 / CCUG 24695 / JCM 21032 / LMG 3331 / NBRC 15819 / NCTC 12168 / Alc 37) (Ochrobactrum anthropi).